We begin with the raw amino-acid sequence, 312 residues long: Ubiquinone biosynthesis O-methyltransferase, mitochondrial (312 aa).

The transit peptide at 1 to 32 directs the protein to the mitochondrion; the sequence is MLLRSRFLKVIHVRKQLSACSRFAIQTQTRCK. S-adenosyl-L-methionine contacts are provided by R68, G130, D153, and M196. E197, E200, and H201 together coordinate Mg(2+).

The protein belongs to the class I-like SAM-binding methyltransferase superfamily. UbiG/COQ3 family. Component of a multi-subunit COQ enzyme complex, composed of at least COQ3, COQ4, COQ5, COQ6, COQ7 and COQ9. Interacts directly with COQ4. Mg(2+) serves as cofactor.

The protein localises to the mitochondrion inner membrane. The enzyme catalyses 3,4-dihydroxy-5-(all-trans-hexaprenyl)benzoate + S-adenosyl-L-methionine = 4-hydroxy-3-methoxy-5-(all-trans-hexaprenyl)benzoate + S-adenosyl-L-homocysteine + H(+). It carries out the reaction a 3-demethylubiquinone + S-adenosyl-L-methionine = a ubiquinone + S-adenosyl-L-homocysteine. The catalysed reaction is 3-demethylubiquinol-6 + S-adenosyl-L-methionine = ubiquinol-6 + S-adenosyl-L-homocysteine + H(+). It participates in cofactor biosynthesis; ubiquinone biosynthesis. Regulated in response to catabolite repression. Its function is as follows. O-methyltransferase required for two non-consecutive steps during ubiquinone biosynthesis. Catalyzes the 2 O-methylation of 3,4-dihydroxy-5-(all-trans-hexaprenyl)benzoic acid into 4-hydroxy-3-methoxy-5-(all-trans-hexaprenyl)benzoic acid. Also catalyzes the last step of ubiquinone biosynthesis by mediating methylation of 3-demethylubiquinone into ubiquinone. Also able to mediate the methylation of 3-demethylubiquinol-6 into ubiquinol-6. The polypeptide is Ubiquinone biosynthesis O-methyltransferase, mitochondrial (Saccharomyces cerevisiae (strain ATCC 204508 / S288c) (Baker's yeast)).